We begin with the raw amino-acid sequence, 310 residues long: Mitogen-activated protein kinase kinase 9 (310 aa).

Residues Leu-47–Leu-306 enclose the Protein kinase domain. ATP-binding positions include Leu-53–Val-61 and Lys-76. Residue Asp-167 is the Proton acceptor of the active site. 2 positions are modified to phosphoserine: Ser-195 and Ser-201. Phosphothreonine is present on Thr-205.

It belongs to the protein kinase superfamily. STE Ser/Thr protein kinase family. MAP kinase kinase subfamily. In terms of processing, phosphorylation at Ser-195 and Ser-201 by MAP kinase kinase kinases positively regulates kinase activity. Autophosphorylated.

The protein localises to the cytoplasm. It localises to the nucleus. It carries out the reaction L-seryl-[protein] + ATP = O-phospho-L-seryl-[protein] + ADP + H(+). The catalysed reaction is L-threonyl-[protein] + ATP = O-phospho-L-threonyl-[protein] + ADP + H(+). It catalyses the reaction L-tyrosyl-[protein] + ATP = O-phospho-L-tyrosyl-[protein] + ADP + H(+). MKK9-MPK3/MPK6 module phosphorylates and activates EIN3, leading to the promotion of EIN3-mediated transcription in ethylene signaling. Autophosphorylates and also phosphorylates MPK3 and MPK6. Plays an important role in ethylene and camalexin biosynthesis and in salt stress response. MKK9-MPK6 module positively regulates leaf senescence. In Arabidopsis thaliana (Mouse-ear cress), this protein is Mitogen-activated protein kinase kinase 9 (MKK9).